The following is a 1033-amino-acid chain: NACHT, LRR and PYD domains-containing protein 11 (1033 aa).

In terms of domain architecture, Pyrin spans 1 to 91; sequence MAESDSTDFD…CRKIIGRRNR (91 aa). Residues 147–470 enclose the NACHT domain; that stretch reads LNVFLMGERA…AFLMAVPNYL (324 aa). 153–160 is an ATP binding site; it reads GERASGKT. 6 LRR repeats span residues 588–611, 632–655, 745–768, 802–827, 859–882, and 919–944; these read CCHL…LIRP, MESL…ILSK, GGSL…ILCD, SPTL…TFPL, NEKL…LLCG, and LERL…LISP.

It belongs to the NLRP family.

Its function is as follows. Involved in inflammation. The protein is NACHT, LRR and PYD domains-containing protein 11 (NLRP11) of Homo sapiens (Human).